We begin with the raw amino-acid sequence, 181 residues long: MLDKSKKERKRNEIEPLINERIKYSQIRLIDTSGSQLGIYSSSEALTIALNAGLDLVLISEKSNPPVCRIIDYGKYKFAQEKKAKEAKKKQHNVTIKEVKMRYKIDVHDYNVRINQAFRFLQGGDKVKANVIFRGREIQHTKLAIELLNKMAQDLSHISEIQQPPAKDGKNMIMILSPKKI.

Belongs to the IF-3 family. Monomer.

It is found in the plastid. The protein resides in the chloroplast. Functionally, IF-3 binds to the 30S ribosomal subunit and shifts the equilibrium between 70S ribosomes and their 50S and 30S subunits in favor of the free subunits, thus enhancing the availability of 30S subunits on which protein synthesis initiation begins. This chain is Translation initiation factor IF-3, chloroplastic, found in Gracilaria tenuistipitata var. liui (Red alga).